The sequence spans 100 residues: Large ribosomal subunit protein bL21 (100 aa).

This sequence belongs to the bacterial ribosomal protein bL21 family. In terms of assembly, part of the 50S ribosomal subunit. Contacts proteins L15 and L20.

Its function is as follows. Binds directly to 23S rRNA, probably serving to organize its structure. The sequence is that of Large ribosomal subunit protein bL21 from Deinococcus radiodurans (strain ATCC 13939 / DSM 20539 / JCM 16871 / CCUG 27074 / LMG 4051 / NBRC 15346 / NCIMB 9279 / VKM B-1422 / R1).